We begin with the raw amino-acid sequence, 399 residues long: MSEKHLFTSESVSEGHPDKVADQISDAILDAILAQDPHAHVACETVVYTGTVNVFGEISTSAYVDIAHVVRETIKKIGYTDSENGFDYKSVGVHVSLVEQSSDIAQGVNEAEEVRDKNGQLVDPLDLIGAGDQGMMFGFATNETAEYMPLAISLSHKLVKKLADLRKSGEISYLRPDAKSQVTVEYDNNGKAKRVDTVVISTQHAATATNEEIHDDVINKVIKAIIPAELLDDETKYFINPTGRFVIGGPQGDSGLTGRKIIVDTYGGYAPHGGGAFSGKDATKVDRSASYAARYVAKNIVAAGLADKAQIQLSYAIGVATPTSINVETFGTGKVSDDELLAAIRKVFDLRPAGIIQMLDLLRPIYGQTAAYGHFGRTDIELPWEQTDKVEELKAVLGK.

His16 is an ATP binding site. Asp18 is a binding site for Mg(2+). Glu44 is a K(+) binding site. L-methionine-binding residues include Glu57 and Gln100. The segment at 100 to 110 is flexible loop; that stretch reads QSSDIAQGVNE. ATP is bound by residues 177 to 179, 244 to 245, Asp253, 259 to 260, Ala276, and Lys280; these read DAK, RF, and RK. An L-methionine-binding site is contributed by Asp253. Lys284 is a binding site for L-methionine.

It belongs to the AdoMet synthase family. As to quaternary structure, homotetramer; dimer of dimers. Requires Mg(2+) as cofactor. K(+) is required as a cofactor.

It localises to the cytoplasm. The catalysed reaction is L-methionine + ATP + H2O = S-adenosyl-L-methionine + phosphate + diphosphate. It participates in amino-acid biosynthesis; S-adenosyl-L-methionine biosynthesis; S-adenosyl-L-methionine from L-methionine: step 1/1. In terms of biological role, catalyzes the formation of S-adenosylmethionine (AdoMet) from methionine and ATP. The overall synthetic reaction is composed of two sequential steps, AdoMet formation and the subsequent tripolyphosphate hydrolysis which occurs prior to release of AdoMet from the enzyme. In Lactococcus lactis subsp. cremoris (strain MG1363), this protein is S-adenosylmethionine synthase.